The primary structure comprises 397 residues: Phosphoglycerate kinase (397 aa).

Substrate-binding positions include 21–23 (DFN), R37, 60–63 (HLGR), R119, and R152. ATP-binding positions include K203, G294, E325, and 354–357 (GGDS).

Belongs to the phosphoglycerate kinase family. As to quaternary structure, monomer.

It is found in the cytoplasm. The enzyme catalyses (2R)-3-phosphoglycerate + ATP = (2R)-3-phospho-glyceroyl phosphate + ADP. It participates in carbohydrate degradation; glycolysis; pyruvate from D-glyceraldehyde 3-phosphate: step 2/5. The chain is Phosphoglycerate kinase from Chlorobium chlorochromatii (strain CaD3).